Consider the following 382-residue polypeptide: UDP-4-amino-4-deoxy-L-arabinose--oxoglutarate aminotransferase (382 aa).

At Lys182 the chain carries N6-(pyridoxal phosphate)lysine.

This sequence belongs to the DegT/DnrJ/EryC1 family. ArnB subfamily. Homodimer. Requires pyridoxal 5'-phosphate as cofactor.

The enzyme catalyses UDP-4-amino-4-deoxy-beta-L-arabinose + 2-oxoglutarate = UDP-beta-L-threo-pentopyranos-4-ulose + L-glutamate. It functions in the pathway nucleotide-sugar biosynthesis; UDP-4-deoxy-4-formamido-beta-L-arabinose biosynthesis; UDP-4-deoxy-4-formamido-beta-L-arabinose from UDP-alpha-D-glucuronate: step 2/3. It participates in bacterial outer membrane biogenesis; lipopolysaccharide biosynthesis. Its function is as follows. Catalyzes the conversion of UDP-4-keto-arabinose (UDP-Ara4O) to UDP-4-amino-4-deoxy-L-arabinose (UDP-L-Ara4N). The modified arabinose is attached to lipid A and is required for resistance to polymyxin and cationic antimicrobial peptides. The chain is UDP-4-amino-4-deoxy-L-arabinose--oxoglutarate aminotransferase from Pectobacterium atrosepticum (strain SCRI 1043 / ATCC BAA-672) (Erwinia carotovora subsp. atroseptica).